The primary structure comprises 215 residues: Thiamine-phosphate synthase (215 aa).

Residues 42-46 (QYREK) and Asp77 each bind 4-amino-2-methyl-5-(diphosphooxymethyl)pyrimidine. Residues Asp78 and Asp97 each coordinate Mg(2+). Ser116 provides a ligand contact to 4-amino-2-methyl-5-(diphosphooxymethyl)pyrimidine. A 2-[(2R,5Z)-2-carboxy-4-methylthiazol-5(2H)-ylidene]ethyl phosphate-binding site is contributed by 143–145 (TKS). Position 146 (Lys146) interacts with 4-amino-2-methyl-5-(diphosphooxymethyl)pyrimidine. 2-[(2R,5Z)-2-carboxy-4-methylthiazol-5(2H)-ylidene]ethyl phosphate-binding positions include Gly174 and 194-195 (IS).

The protein belongs to the thiamine-phosphate synthase family. Mg(2+) serves as cofactor.

The catalysed reaction is 2-[(2R,5Z)-2-carboxy-4-methylthiazol-5(2H)-ylidene]ethyl phosphate + 4-amino-2-methyl-5-(diphosphooxymethyl)pyrimidine + 2 H(+) = thiamine phosphate + CO2 + diphosphate. It catalyses the reaction 2-(2-carboxy-4-methylthiazol-5-yl)ethyl phosphate + 4-amino-2-methyl-5-(diphosphooxymethyl)pyrimidine + 2 H(+) = thiamine phosphate + CO2 + diphosphate. It carries out the reaction 4-methyl-5-(2-phosphooxyethyl)-thiazole + 4-amino-2-methyl-5-(diphosphooxymethyl)pyrimidine + H(+) = thiamine phosphate + diphosphate. It functions in the pathway cofactor biosynthesis; thiamine diphosphate biosynthesis; thiamine phosphate from 4-amino-2-methyl-5-diphosphomethylpyrimidine and 4-methyl-5-(2-phosphoethyl)-thiazole: step 1/1. Condenses 4-methyl-5-(beta-hydroxyethyl)thiazole monophosphate (THZ-P) and 2-methyl-4-amino-5-hydroxymethyl pyrimidine pyrophosphate (HMP-PP) to form thiamine monophosphate (TMP). The polypeptide is Thiamine-phosphate synthase (Limosilactobacillus reuteri (strain DSM 20016) (Lactobacillus reuteri)).